Consider the following 65-residue polypeptide: Alpha-insect toxin BotIT1 (65 aa).

The 63-residue stretch at 2 to 64 (RDAYIAQNYN…VPIRIPGKCH (63 aa)) folds into the LCN-type CS-alpha/beta domain. 4 disulfides stabilise this stretch: Cys12–Cys63, Cys16–Cys36, Cys22–Cys46, and Cys26–Cys48.

It belongs to the long (4 C-C) scorpion toxin superfamily. Sodium channel inhibitor family. Alpha subfamily. In terms of tissue distribution, expressed by the venom gland.

Its subcellular location is the secreted. Alpha toxins bind voltage-independently at site-3 of sodium channels (Nav) and inhibit the inactivation of the activated channels, thereby blocking neuronal transmission. This contractive toxin is highly toxic to insects and barely toxic to mammals. This Buthus occitanus tunetanus (Common European scorpion) protein is Alpha-insect toxin BotIT1.